The following is a 271-amino-acid chain: Thiazole synthase (271 aa).

Lysine 95 serves as the catalytic Schiff-base intermediate with DXP. 1-deoxy-D-xylulose 5-phosphate-binding positions include glycine 156, 182–183 (AG), and 204–205 (NT).

The protein belongs to the ThiG family. In terms of assembly, homotetramer. Forms heterodimers with either ThiH or ThiS.

Its subcellular location is the cytoplasm. The catalysed reaction is [ThiS sulfur-carrier protein]-C-terminal-Gly-aminoethanethioate + 2-iminoacetate + 1-deoxy-D-xylulose 5-phosphate = [ThiS sulfur-carrier protein]-C-terminal Gly-Gly + 2-[(2R,5Z)-2-carboxy-4-methylthiazol-5(2H)-ylidene]ethyl phosphate + 2 H2O + H(+). It functions in the pathway cofactor biosynthesis; thiamine diphosphate biosynthesis. Its function is as follows. Catalyzes the rearrangement of 1-deoxy-D-xylulose 5-phosphate (DXP) to produce the thiazole phosphate moiety of thiamine. Sulfur is provided by the thiocarboxylate moiety of the carrier protein ThiS. In vitro, sulfur can be provided by H(2)S. The chain is Thiazole synthase from Shewanella amazonensis (strain ATCC BAA-1098 / SB2B).